Reading from the N-terminus, the 500-residue chain is Probable cardiolipin synthase YwiE (500 aa).

3 consecutive transmembrane segments (helical) span residues 6-26 (LEFF…FFPV), 31-51 (FYGG…SLIL), and 59-79 (TLLW…FYLF). 2 consecutive PLD phosphodiesterase domains span residues 237 to 264 (LNFR…GKEY) and 413 to 440 (QKGF…DMRS). Catalysis depends on residues H242, K244, D249, H418, K420, and D425.

It belongs to the phospholipase D family. Cardiolipin synthase subfamily.

The protein resides in the cell membrane. The catalysed reaction is 2 a 1,2-diacyl-sn-glycero-3-phospho-(1'-sn-glycerol) = a cardiolipin + glycerol. In terms of biological role, catalyzes the reversible phosphatidyl group transfer from one phosphatidylglycerol molecule to another to form cardiolipin (CL) (diphosphatidylglycerol) and glycerol. May have a role in the heat shock response since the level of the transcript of ywiE increases after a heat shock. This is Probable cardiolipin synthase YwiE (ywiE) from Bacillus subtilis (strain 168).